The sequence spans 1247 residues: Lon protease homolog 2, peroxisomal (1247 aa).

Residues 22 to 402 (LPTYTLDSNL…LINEMILQLI (381 aa)) enclose the Lon N-terminal domain. 3 disordered regions span residues 76 to 103 (SGNS…ETYH), 447 to 503 (TKNR…DVDD), and 626 to 655 (DQSD…SPTS). Positions 459–477 (PGPASSSGPSFSNGKSSPG) are enriched in low complexity. Residues 626–639 (DQSDKSQPIKDNSK) are compositionally biased toward basic and acidic residues. 721-728 (GPPGTGKT) lines the ATP pocket. The Lon proteolytic domain occupies 989 to 1230 (TVGVGVVHGL…YDIIKIVWNE (242 aa)). Residues serine 1099 and lysine 1142 contribute to the active site.

This sequence belongs to the peptidase S16 family.

It is found in the peroxisome matrix. It carries out the reaction Hydrolysis of proteins in presence of ATP.. ATP-dependent serine protease that mediates the selective degradation of misfolded and unassembled polypeptides in the peroxisomal matrix. Necessary for type 2 peroxisome targeting signal (PTS2)-containing protein processing and facilitates peroxisome matrix protein import. The sequence is that of Lon protease homolog 2, peroxisomal from Candida dubliniensis (strain CD36 / ATCC MYA-646 / CBS 7987 / NCPF 3949 / NRRL Y-17841) (Yeast).